Here is a 92-residue protein sequence, read N- to C-terminus: Large ribosomal subunit protein eL31 (92 aa).

It belongs to the eukaryotic ribosomal protein eL31 family.

The polypeptide is Large ribosomal subunit protein eL31 (Haloquadratum walsbyi (strain DSM 16790 / HBSQ001)).